The chain runs to 152 residues: Atypical leghemoglobin 2-1 (152 aa).

The region spanning 3–152 is the Globin domain; the sequence is TFSEEQEALV…LAGVIKKGMS (150 aa). Y31 is subject to Nitrated tyrosine. S46 contacts heme b. S46 bears the Phosphoserine mark. An O2-binding site is contributed by H64. Heme b contacts are provided by K67, H99, and R102. Y140 carries the post-translational modification Nitrated tyrosine.

Belongs to the plant globin family. In terms of assembly, monomer. Nitrated in effective nodules and particularly in hypoxic conditions; this mechanism may play a protective role in the symbiosis by buffering toxic peroxynitrite NO(2)(-). Nitration level decrease during nodule senescence. Post-translationally, phosphorylation at Ser-46 disrupts the molecular environment of its porphyrin ring oxygen binding pocket, thus leading to a reduced oxygen consumption and to the delivery of oxygen O(2) to symbiosomes. In terms of tissue distribution, mainly expressed in leaves and, at low levels, in roots of non-nodulated plants. However, accumulates also in nodules and roots, and, to a lower extent, in leaves, stems, flowers and fruits, in nodulated plants.

Atypical leghemoglobin that reversibly binds oxygen O(2) through a pentacoordinated heme iron. In nodules, facilitates the diffusion of oxygen to the bacteroids while preventing the bacterial nitrogenase from being inactivated by buffering dioxygen, nitric oxide and carbon monoxide. This role is essential for symbiotic nitrogen fixation (SNF). Seems not restricted to symbiotic nitrogen fixation and root nodules formation, but also contributes to general plant development and metabolism. This Lotus japonicus (Lotus corniculatus var. japonicus) protein is Atypical leghemoglobin 2-1.